The chain runs to 1555 residues: Glycogen debranching enzyme (1555 aa).

Ser87 carries the phosphoserine modification. Catalysis depends on residues Asp549, His552, and Asp650.

It belongs to the glycogen debranching enzyme family. Monomer. Interacts with NHLRC1/malin. In terms of processing, the N-terminus is blocked. Ubiquitinated.

The protein resides in the cytoplasm. It carries out the reaction Transfers a segment of a (1-&gt;4)-alpha-D-glucan to a new position in an acceptor, which may be glucose or a (1-&gt;4)-alpha-D-glucan.. The enzyme catalyses Hydrolysis of (1-&gt;6)-alpha-D-glucosidic branch linkages in glycogen phosphorylase limit dextrin.. Functionally, multifunctional enzyme acting as 1,4-alpha-D-glucan:1,4-alpha-D-glucan 4-alpha-D-glycosyltransferase and amylo-1,6-glucosidase in glycogen degradation. The polypeptide is Glycogen debranching enzyme (AGL) (Oryctolagus cuniculus (Rabbit)).